Here is a 412-residue protein sequence, read N- to C-terminus: MKSEELFTTAKTCLPGGVSSPVRAIKPYPFYVKSARGATLETEDGESLVDCCMGYGPLLLGHAHPAIQKAIEAQLDAGWLYGTPTKLEIDLAQRICRDHPSIEMLRCVSTGLEATLAAIRLARGFTGKCGIVKLEGGFHGAHDAVLIAAGSGATTHGTPDSLGVPPSFAAQTRQVPYNDPEALEELLSKDKEIAAFILEPVMGNVGPVLPDDGYLSAVREITKAHDVLLIFDEVITGYRVGIGGAQKKYGIKPDLTTLGKITGGGLPIGVFGGRRDIMELVSPSGGVYNAGTFNGNPLSMAAGIATNVYLHENESLYAELDEKTRAIEESLPAKASGSFVRLGSLFKYFFRSTAPRNYLEAKESDTAAFRVFFEKALKDGVFIPPSQFETNFLSTAHDASSMEKIISVYQHV.

Position 260 is an N6-(pyridoxal phosphate)lysine (K260).

This sequence belongs to the class-III pyridoxal-phosphate-dependent aminotransferase family. HemL subfamily. Pyridoxal 5'-phosphate serves as cofactor.

It localises to the cytoplasm. It catalyses the reaction (S)-4-amino-5-oxopentanoate = 5-aminolevulinate. It functions in the pathway porphyrin-containing compound metabolism; protoporphyrin-IX biosynthesis; 5-aminolevulinate from L-glutamyl-tRNA(Glu): step 2/2. This is Glutamate-1-semialdehyde 2,1-aminomutase from Methanocorpusculum labreanum (strain ATCC 43576 / DSM 4855 / Z).